The sequence spans 287 residues: Aquaporin PIP1-1 (287 aa).

A run of 2 helical transmembrane segments spans residues 57–77 (IAEF…VMGV) and 92–114 (IAWS…SGHI). Positions 115 to 117 (NPA) match the NPA 1 motif. Helical transmembrane passes span 134 to 154 (VFYI…VKGF), 176 to 196 (GDGL…VFSA), and 210 to 230 (ILAP…TMGI). Positions 236-238 (NPA) match the NPA 2 motif. A helical membrane pass occupies residues 258–278 (IFWVGPFIGAALAAIYHQVII).

Belongs to the MIP/aquaporin (TC 1.A.8) family. PIP (TC 1.A.8.11) subfamily. In terms of assembly, may interact with PIP1-2 to form heteromers. Highly expressed in roots, shoots and developing tassels, and at lower levels in leaves.

The protein localises to the cell membrane. Its function is as follows. Water channel required to facilitate the transport of water across cell membrane. Active as heteromers with PIP1-2, but not as homomers. The polypeptide is Aquaporin PIP1-1 (PIP1-1) (Zea mays (Maize)).